A 405-amino-acid chain; its full sequence is Phosphoglycerate kinase (405 aa).

Residues 21–23 (DFN), arginine 36, 59–62 (HLGR), arginine 119, and arginine 161 contribute to the substrate site. Residues lysine 212, glycine 301, glutamate 332, and 361–364 (GGDS) contribute to the ATP site.

The protein belongs to the phosphoglycerate kinase family. Monomer.

It is found in the cytoplasm. The catalysed reaction is (2R)-3-phosphoglycerate + ATP = (2R)-3-phospho-glyceroyl phosphate + ADP. The protein operates within carbohydrate degradation; glycolysis; pyruvate from D-glyceraldehyde 3-phosphate: step 2/5. The polypeptide is Phosphoglycerate kinase (Leuconostoc citreum (strain KM20)).